The chain runs to 165 residues: Phosphopantetheine adenylyltransferase (165 aa).

Ser9 lines the substrate pocket. ATP is bound by residues Ser9 to Phe10 and His17. The substrate site is built by Lys41, Ile75, and Arg89. ATP-binding positions include Gly90–Arg92, Glu100, and Tyr125–Asp131.

Belongs to the bacterial CoaD family. Homohexamer. The cofactor is Mg(2+).

The protein localises to the cytoplasm. It catalyses the reaction (R)-4'-phosphopantetheine + ATP + H(+) = 3'-dephospho-CoA + diphosphate. It functions in the pathway cofactor biosynthesis; coenzyme A biosynthesis; CoA from (R)-pantothenate: step 4/5. Functionally, reversibly transfers an adenylyl group from ATP to 4'-phosphopantetheine, yielding dephospho-CoA (dPCoA) and pyrophosphate. This chain is Phosphopantetheine adenylyltransferase, found in Borrelia turicatae (strain 91E135).